The sequence spans 66 residues: MEVDAPGVDGRDGLRERRGFSEGGRQNFDVRPQSGANGLPKHSYWLDLWLFILFDVVVFLFVYFLP.

Position 1 is an N-acetylmethionine (Met-1). Residues 1–37 form a disordered region; the sequence is MEVDAPGVDGRDGLRERRGFSEGGRQNFDVRPQSGAN. Residues 9-20 show a composition bias toward basic and acidic residues; it reads DGRDGLRERRGF. Residues 45–65 traverse the membrane as a helical segment; that stretch reads WLDLWLFILFDVVVFLFVYFL.

In terms of assembly, homooligomer. Can also form heterooligomers with other sarcoplasmic/endoplasmic reticulum calcium ATPase (SERCA) regulators ERLN, PLN, SLN and STRIT1/DWORF. Monomer. Interacts as a monomer with ATP2A2/SERCA2; the interaction results in inhibition of ATP2A2 Ca(2+) affinity.

Its subcellular location is the endoplasmic reticulum membrane. Functionally, inhibits the activity of the calcium ATPases ATP2A2/SERCA2 and ATP2A3/SERCA3 by decreasing their apparent affinity for Ca(2+). This Homo sapiens (Human) protein is Sarcoplasmic/endoplasmic reticulum calcium ATPase regulator ARLN.